A 793-amino-acid polypeptide reads, in one-letter code: Xaa-Pro dipeptidyl-peptidase (793 aa).

Residues S363, D483, and H514 each act as charge relay system in the active site.

It belongs to the peptidase S15 family. As to quaternary structure, homodimer.

It localises to the cytoplasm. It carries out the reaction Hydrolyzes Xaa-Pro-|- bonds to release unblocked, N-terminal dipeptides from substrates including Ala-Pro-|-p-nitroanilide and (sequentially) Tyr-Pro-|-Phe-Pro-|-Gly-Pro-|-Ile.. Removes N-terminal dipeptides sequentially from polypeptides having unsubstituted N-termini provided that the penultimate residue is proline. The sequence is that of Xaa-Pro dipeptidyl-peptidase from Lactobacillus helveticus (strain DPC 4571).